A 473-amino-acid polypeptide reads, in one-letter code: Spliceosome-associated protein CWC27 homolog (473 aa).

Position 2 is an N-acetylserine (serine 2). Residues 11–166 (TNGKVLLKTT…NSHKIRSCEV (156 aa)) form the PPIase cyclophilin-type domain. A compositionally biased stretch (basic and acidic residues) spans 178-193 (EIKKPKKEKPEEEVKK). 3 disordered regions span residues 178-197 (EIKKPKKEKPEEEVKKLKPK), 203-383 (SLLS…TSRE), and 401-473 (IAET…KERR). A coiled-coil region spans residues 206–230 (SFGEEAEEEEEEVNRVSQSMKGKSK). Basic and acidic residues predominate over residues 231–241 (SSHDLLKDDPH). The short motif at 252–254 (RGD) is the Cell attachment site element. A compositionally biased stretch (acidic residues) spans 256–266 (AEDSDDDGEYE). Composition is skewed to basic and acidic residues over residues 267-348 (GAEH…KRSE) and 360-372 (EYRREKQKYEALR). A coiled-coil region spans residues 311–378 (VSRSEELRKE…EALRKQQAKT (68 aa)). Position 347 is a phosphoserine (serine 347). Over residues 405–419 (PENDISETEVEDDEG) the composition is skewed to acidic residues. Composition is skewed to basic and acidic residues over residues 426–438 (QFEDKSRKVKDAS) and 458–473 (RREESKKLMREKKERR).

Belongs to the cyclophilin-type PPIase family. As to quaternary structure, part of the activated spliceosome B/catalytic step 1 spliceosome, one of the forms of the spliceosome which has a well-formed active site but still cannot catalyze the branching reaction and is composed at least of 52 proteins, the U2, U5 and U6 snRNAs and the pre-mRNA. Recruited during early steps of activated spliceosome B maturation, it is probably one of the first proteins released from this complex as he matures to the spliceosome C complex. Component of the minor spliceosome, which splices U12-type introns.

The protein localises to the nucleus. Functionally, as part of the spliceosome, plays a role in pre-mRNA splicing. Probable inactive PPIase with no peptidyl-prolyl cis-trans isomerase activity. As a component of the minor spliceosome, involved in the splicing of U12-type introns in pre-mRNAs. The protein is Spliceosome-associated protein CWC27 homolog of Bos taurus (Bovine).